The following is a 361-amino-acid chain: Histidinol-phosphate aminotransferase (361 aa).

The residue at position 219 (K219) is an N6-(pyridoxal phosphate)lysine.

Belongs to the class-II pyridoxal-phosphate-dependent aminotransferase family. Histidinol-phosphate aminotransferase subfamily. Homodimer. Requires pyridoxal 5'-phosphate as cofactor.

The catalysed reaction is L-histidinol phosphate + 2-oxoglutarate = 3-(imidazol-4-yl)-2-oxopropyl phosphate + L-glutamate. The protein operates within amino-acid biosynthesis; L-histidine biosynthesis; L-histidine from 5-phospho-alpha-D-ribose 1-diphosphate: step 7/9. This is Histidinol-phosphate aminotransferase from Acinetobacter baumannii (strain ATCC 17978 / DSM 105126 / CIP 53.77 / LMG 1025 / NCDC KC755 / 5377).